The sequence spans 340 residues: Erythroferrone (340 aa).

The first 24 residues, 1-24 (MASTRRPVGARTLLACASLLAAMG), serve as a signal peptide directing secretion. Disordered regions lie at residues 30–63 (SAEP…IAHA), 79–112 (SDKG…GPPG), and 141–161 (HCTR…PAAQ). Residues 40 to 58 (PQPPGAELPAPPANSPPEP) are compositionally biased toward pro residues. The span at 84-95 (NSKRRSKARRLK) shows a compositional bias: basic residues. A hydroxyproline mark is found at P99, P101, P102, P104, P105, and P107. The segment covering 99-112 (PGPPGPPGPQGPPG) has biased composition (pro residues). Residues 145–154 (DLTTPASGSP) are compositionally biased toward polar residues. Positions 185 to 340 (APRVEAAFHC…SHFSAILLGL (156 aa)) constitute a C1q domain. N229, N281, N292, and N319 each carry an N-linked (GlcNAc...) asparagine glycan.

This sequence belongs to the adipolin/erythroferrone family. As to quaternary structure, homodimer; disulfide-linked. Forms trimer, hexamers and higher molecular weight oligomers. May form heteromeric complexes with C1QTNF2 and C1QTNF12 and, to a lesser extent, with C1QTNF5 and C1QTNF10. Interacts with BMP5 and BMP7; the interaction inhibits BMP-induced transcription of HAMP. Interacts with BMP6; the interaction inhibits BMP-induced transcription of HAMP. Interacts with BMP2. Interacts with heterodimers composed of BMP2 and BMP6 in vitro, the interaction inhibits the heterodimer binding to its receptor BMPR1A /ALK3 and thereby suppresses expression of HAMP. In terms of processing, N-glycosylated; required for secretion of the mature protein. As to expression, expressed in the soleus muscle in the leg (at protein level). Found in blood (at protein level). Weakly expressed in the heart (at protein level). Predominantly expressed in skeletal muscle and, at much lower levels, in other tissues, including lung, eye, smooth muscle, brain and kidney. Within skeletal muscles, higher expression levels in soleus as compared with plantaris. Expressed in osteoblasts, mature osteoclasts and erythroblasts. When fasting, females tend to have higher circulating levels than males. Obese mice tend to have lower expression and circulating levels as compared to lean animals. Following EPO treatment, only expressed in bone marrow and spleen.

The protein resides in the secreted. In terms of biological role, iron-regulatory hormone that acts as an erythroid regulator after hemorrhage: produced by erythroblasts following blood loss and mediates suppression of hepcidin (HAMP) expression in the liver, thereby promoting increased iron absorption and mobilization from stores. Promotes lipid uptake into adipocytes and hepatocytes via transcriptional up-regulation of genes involved in fatty acid uptake. Inhibits apoptosis and inflammatory response in cardiomyocytes via promotion of sphingosine-1-phosphate (S1P) and cAMP-dependent activation of AKT signaling. Inhibits autophagy induced by nutrient deficiency in hepatocytes via promoting the phosphorylation of IRS1, AKT, and MTOR, and thereby subsequent activation of the AKT-MTOR signaling pathway. Negatively regulates the differentiation of osteoblasts, potentially via sequestering BMP2, and thereby inhibits the activation of SMAD signaling. The reduction in BMP2 signaling in osteoblasts also results in an increase in expression of the osteoclastogenesis-promoting factors TNFSF11/RANKL and SOST, thereby indirectly promotes bone resorption. The sequence is that of Erythroferrone from Mus musculus (Mouse).